Here is a 908-residue protein sequence, read N- to C-terminus: SH3 and PX domain-containing protein 2B (908 aa).

Residues 5–129 form the PX domain; sequence RSIVEVKVLD…QFFETRPEDL (125 aa). Phosphotyrosine is present on Tyr-25. SH3 domains follow at residues 152–211 and 221–280; these read MVLE…GQDG and EEEE…KNSG. A phosphoserine mark is found at Ser-279 and Ser-291. Disordered regions lie at residues 280 to 300 and 315 to 366; these read GEPL…ALDL and ELLN…PPIP. Basic and acidic residues predominate over residues 315-337; that stretch reads ELLNNQRDGRFEGRLVPDGDVKQ. A compositionally biased stretch (basic residues) spans 338–347; sequence RSPKMRQRPP. Residues 368–427 form the SH3 3 domain; sequence QVEEEYYTIAEFQTTIPDGISFQAGLKVEVIEKSLSGWWYIQMEDKEGWAPATFIDKYKK. The interval 455-832 is disordered; the sequence is TENNTGPEAV…LGPRVTGKVG (378 aa). 5 stretches are compositionally biased toward basic and acidic residues: residues 486–499, 516–546, 569–584, 595–606, and 615–625; these read KDWK…RKAS, QEEK…KMEP, LARD…DKSK, CGHKVLAKEVKK, and SKAELSEEKVD. A phosphoserine mark is found at Ser-499 and Ser-528. Tyr-661 carries the phosphotyrosine modification. The segment covering 671–684 has biased composition (basic and acidic residues); that stretch reads KSQEKALLDGESHH. Over residues 754–764 the composition is skewed to pro residues; sequence VVPPRRPPPPK. Ser-840 carries the post-translational modification Phosphoserine. The SH3 4 domain occupies 847–908; that stretch reads PKDSLYVAVA…IPSNYLRKKP (62 aa).

This sequence belongs to the SH3PXD2 family. As to quaternary structure, interacts with NOXO1. Interacts (via SH3 domains) with NOXA1; the interaction is direct. Interacts with ADAM15. Interacts with FASLG. Post-translationally, phosphorylated in SRC-transformed cells. As to expression, highly expressed in the stromal-vascular fraction of white adipose tissue with moderate expression in heart, skeletal muscle and the mature adipocyte fraction of white adipose tissue. Also expressed in brain, spleen, kidney and liver. Expressed in white and brown adipose tissues, eye, lung, heart, brain, spleen, stomach, liver and skeletal muscle (at protein level). Not expressed in kidney or bone marrow.

The protein localises to the cytoplasm. Its subcellular location is the cell projection. It localises to the podosome. Its function is as follows. Adapter protein involved in invadopodia and podosome formation and extracellular matrix degradation. Binds matrix metalloproteinases (ADAMs), NADPH oxidases (NOXs) and phosphoinositides. Acts as an organizer protein that allows NOX1- or NOX3-dependent reactive oxygen species (ROS) generation and ROS localization. Plays a role in mitotic clonal expansion during the immediate early stage of adipocyte differentiation. The chain is SH3 and PX domain-containing protein 2B (Sh3pxd2b) from Mus musculus (Mouse).